The following is a 296-amino-acid chain: Phosphoribosylaminoimidazole-succinocarboxamide synthase (296 aa).

This sequence belongs to the SAICAR synthetase family.

The catalysed reaction is 5-amino-1-(5-phospho-D-ribosyl)imidazole-4-carboxylate + L-aspartate + ATP = (2S)-2-[5-amino-1-(5-phospho-beta-D-ribosyl)imidazole-4-carboxamido]succinate + ADP + phosphate + 2 H(+). It functions in the pathway purine metabolism; IMP biosynthesis via de novo pathway; 5-amino-1-(5-phospho-D-ribosyl)imidazole-4-carboxamide from 5-amino-1-(5-phospho-D-ribosyl)imidazole-4-carboxylate: step 1/2. The protein is Phosphoribosylaminoimidazole-succinocarboxamide synthase of Pelobacter propionicus (strain DSM 2379 / NBRC 103807 / OttBd1).